The following is a 492-amino-acid chain: Catalase isozyme 1 (492 aa).

Residues H65 and N138 contribute to the active site. Residue Y348 coordinates heme.

The protein belongs to the catalase family. In terms of assembly, homotetramer. Heme is required as a cofactor. In terms of tissue distribution, scutella, milky endosperm of immature kernels, leaves and epicotyls.

It localises to the peroxisome. The enzyme catalyses 2 H2O2 = O2 + 2 H2O. Functionally, occurs in almost all aerobically respiring organisms and serves to protect cells from the toxic effects of hydrogen peroxide. This chain is Catalase isozyme 1 (CAT1), found in Zea mays (Maize).